The following is a 249-amino-acid chain: Probable transcriptional regulatory protein A1S_1496 (249 aa).

Belongs to the TACO1 family.

The protein resides in the cytoplasm. In Acinetobacter baumannii (strain ATCC 17978 / DSM 105126 / CIP 53.77 / LMG 1025 / NCDC KC755 / 5377), this protein is Probable transcriptional regulatory protein A1S_1496.